Consider the following 181-residue polypeptide: MMNISGPREGDFITIKSYKHDGSLHRTWRDTMVLKTSENALIGCNDHTLVTESDGRRWITREPALVYFHKHYWFNIVTMIRENGVSYYCNLASPAVLDKEALKYIDYDLDVKVFPNGEKRLLDVDEYEDHGNKWHYSADIDKILKHNVRVLVDWINNGKGPFSKEYVEIWYNRYLELSRQQ.

Residue R26 is the Proton donor of the active site. Mg(2+)-binding residues include N90, D106, D108, D110, D123, and E126.

Belongs to the Ntdp family. Mg(2+) serves as cofactor.

The catalysed reaction is a ribonucleoside 5'-triphosphate + H2O = a ribonucleoside 5'-diphosphate + phosphate + H(+). It catalyses the reaction a ribonucleoside 5'-diphosphate + H2O = a ribonucleoside 5'-phosphate + phosphate + H(+). Has nucleoside phosphatase activity towards nucleoside triphosphates and nucleoside diphosphates. The sequence is that of Nucleoside triphosphate/diphosphate phosphatase from Ligilactobacillus salivarius (strain UCC118) (Lactobacillus salivarius).